Consider the following 93-residue polypeptide: U12-lycotoxin-Ls1d (93 aa).

The signal sequence occupies residues 1 to 18 (MKFAVILLFSLVVLAVAS). A propeptide spanning residues 19–38 (ESVEEVRREIDIEDLPEQQR) is cleaved from the precursor.

This sequence belongs to the neurotoxin 31 family. Contains 5 disulfide bonds. In terms of tissue distribution, expressed by the venom gland.

Its subcellular location is the secreted. The polypeptide is U12-lycotoxin-Ls1d (Lycosa singoriensis (Wolf spider)).